Consider the following 525-residue polypeptide: Peptide chain release factor 3 (525 aa).

In terms of domain architecture, tr-type G spans 9-276 (AKRRTFAIIS…GFTRYAPAPQ (268 aa)). Residues 18-25 (SHPDAGKT), 86-90 (DTPGH), and 140-143 (NKFD) contribute to the GTP site.

The protein belongs to the TRAFAC class translation factor GTPase superfamily. Classic translation factor GTPase family. PrfC subfamily.

The protein localises to the cytoplasm. In terms of biological role, increases the formation of ribosomal termination complexes and stimulates activities of RF-1 and RF-2. It binds guanine nucleotides and has strong preference for UGA stop codons. It may interact directly with the ribosome. The stimulation of RF-1 and RF-2 is significantly reduced by GTP and GDP, but not by GMP. The sequence is that of Peptide chain release factor 3 from Francisella tularensis subsp. mediasiatica (strain FSC147).